A 765-amino-acid polypeptide reads, in one-letter code: MAFPVISTYRVQMRGRSNGFGFTFADAENLLDYLDDLGVSHLYLSPILTAVGGSTHGYDVTDPTTVSPELGGSDGLARLSAAARSRGMGLIVDIVPSHVGVGKPEQNAWWWDVLKFGRSSAYAEFFDIDWELGDGRIILPLLGSDSDVANLRVDGDLLRLGDLALPVAPGSGDGTGPAVHDRQHYRLVGWRHGLCGYRRFFSITSLAGLRQEDRAVFDASHAEVARWFTEGLVDGVRVDHLDGLSDPSGYLAQLRELLGPNAWIVVEKILAVDEALEPTLPVDGSTGYDVLREIGGVLVDPQGESPLTALVESAGVDYQEMPAMLADLKVHAAVHTLASELRRLRRCIAAAAGADHPLLPAAVAALLRHIGRYRCDYPGQAAVLPCALAETHSTTPQLAPGLQLIAAAVARGGEPAVRLQQLCGAVSAKAVEDCMFYRDARLVSLNEVGGEPRRFGVGAAEFHHRAATRARLWPRSMTTLSTHDTKRGEDVRARIGVLSQVPWLWAKFIGHAQAIAPAPDAVTGQFLWQNVFGVWPVSGEVSAALRGRLHTYAEKAIREAAWHTSWHNPNRAFEDDVHGWLDLVLDGPLASELTGLVAHLNSHAESDALAAKLLALTVPGVPDVYQGSELWDDSLVDPDNRRPVDYGTRRVALKALQHPKIRVLAAALRLRRTHPESFLGGAYHPVFAAGPAADHVVAFRRGDDILVAVTRWTVRLQQTGWDHTVLPLPDGSWTDALTGFTASGHTPAVELFADLPVVLLVRDNA.

The protein belongs to the glycosyl hydrolase 13 family. In terms of assembly, monomer.

It carries out the reaction 4-[(1-&gt;4)-alpha-D-glucosyl](n-1)-D-glucose = 1-[(1-&gt;4)-alpha-D-glucosyl](n-1)-alpha-D-glucose. Catalyzes the conversion of maltooligosaccharide into the non-reducing saccharide, maltooligosyl trehalose (alpha-maltooligosyl alpha-D-glucoside) by intramolecular transglycosylation. This is Putative maltooligosyl trehalose synthase (treY) from Mycobacterium tuberculosis (strain CDC 1551 / Oshkosh).